The primary structure comprises 130 residues: Small ribosomal subunit protein uS8 (130 aa).

It belongs to the universal ribosomal protein uS8 family. As to quaternary structure, part of the 30S ribosomal subunit. Contacts proteins S5 and S12.

In terms of biological role, one of the primary rRNA binding proteins, it binds directly to 16S rRNA central domain where it helps coordinate assembly of the platform of the 30S subunit. This is Small ribosomal subunit protein uS8 from Klebsiella pneumoniae (strain 342).